Reading from the N-terminus, the 219-residue chain is Glutathione S-transferase 3 (219 aa).

Residues 3–82 (DEVVLLDTWA…YIDEVWNDKS (80 aa)) form the GST N-terminal domain. Residues S13, I54, and 66 to 67 (ES) contribute to the glutathione site. A GST C-terminal domain is found at 88 to 216 (DPYKRSQARF…GLIVELQKTL (129 aa)).

It belongs to the GST superfamily. HSP26 family. As to quaternary structure, homodimer. degradation; (R)-lactate from methylglyoxal: step 1/2.

It catalyses the reaction RX + glutathione = an S-substituted glutathione + a halide anion + H(+). Functionally, conjugation of reduced glutathione to a wide number of exogenous and endogenous hydrophobic electrophiles. Involved in the detoxification of certain herbicides. In Glycine max (Soybean), this protein is Glutathione S-transferase 3 (GST3).